Reading from the N-terminus, the 611-residue chain is Aspartate--tRNA(Asp/Asn) ligase (611 aa).

Residue glutamate 177 participates in L-aspartate binding. The interval 201-204 (QLFK) is aspartate. Residue arginine 223 participates in L-aspartate binding. Residues 223 to 225 (RDE) and glutamine 232 contribute to the ATP site. L-aspartate is bound at residue histidine 461. Glutamate 499 contacts ATP. Arginine 506 provides a ligand contact to L-aspartate. 551–554 (GVDR) contributes to the ATP binding site.

This sequence belongs to the class-II aminoacyl-tRNA synthetase family. Type 1 subfamily. In terms of assembly, homodimer.

The protein localises to the cytoplasm. The enzyme catalyses tRNA(Asx) + L-aspartate + ATP = L-aspartyl-tRNA(Asx) + AMP + diphosphate. Functionally, aspartyl-tRNA synthetase with relaxed tRNA specificity since it is able to aspartylate not only its cognate tRNA(Asp) but also tRNA(Asn). Reaction proceeds in two steps: L-aspartate is first activated by ATP to form Asp-AMP and then transferred to the acceptor end of tRNA(Asp/Asn). In Synechococcus sp. (strain WH7803), this protein is Aspartate--tRNA(Asp/Asn) ligase.